The chain runs to 114 residues: UPF0342 protein LSL_0473 (114 aa).

This sequence belongs to the UPF0342 family.

This Ligilactobacillus salivarius (strain UCC118) (Lactobacillus salivarius) protein is UPF0342 protein LSL_0473.